The sequence spans 559 residues: Putative ankyrin repeat protein RBE_0902 (559 aa).

10 ANK repeats span residues 11–40 (DGWTVLTFAAAYGLEKVCEALIPKMSEQAI), 46–75 (DGNTALTWAAYTGLEKVCEALIPKMSDQAI), 81–110 (DGNTALSIARNKGFKNMCDLLTTIEATKQN), 158–189 (DDWTALTFAAAYGLEKVCELLIPKMTDQVINH), 228–257 (NNDTVLTLAANKSLGKICEILIPKMTDQAI), 263–292 (DGNTALIAAASSHLEKICEALIPKMSDQAI), 298–327 (YGNTALIAAASSGLEKVCETLIPKMTEQAI), 333–364 (QCDTALIFAVRNSLKKVCEVLIPKMSYEAINC), 372–402 (FGFTAFTWVTLNGDKKICELLIPKTSPEVII), and 524–554 (IDNNEIHISCLTTEIIAHIVEYLENEKWGLE).

The sequence is that of Putative ankyrin repeat protein RBE_0902 from Rickettsia bellii (strain RML369-C).